A 237-amino-acid polypeptide reads, in one-letter code: DNA repair protein RecO (237 aa).

Belongs to the RecO family.

In terms of biological role, involved in DNA repair and RecF pathway recombination. The chain is DNA repair protein RecO from Rickettsia felis (strain ATCC VR-1525 / URRWXCal2) (Rickettsia azadi).